A 388-amino-acid chain; its full sequence is MWPWLERIASACWDRVRRYALTRRDEEDGSGSGGDADDLLLWSRDLVRHAAGEFSFAVVQANDVLEDHSQVETGAAATFIGVYDGHGGAEASRFISNHLAAHLVRLAQERGTISEDIVRNAFSATEEGFLSLVRRTHLIKPSIASIGSCCLVGIIWKGTLYLANLGDSRAVVGCLTGSNKIVAEQLTRDHNASMEEVRQELRSLHPDDSQIVVLKNGVWRIKGIIQVSRSIGDAYLKKQEFALDPSMTRFHLSEPLRRPVLTSEPSIYTRVLHSQDSFFIFASDGLWEHLTNQQAVEIVHNNPREGIARRLVKAALKEAARKREMKYNDIKKLEKGVRRFFHDDITVVVVFIDHELLQDGDESTPEISVRGFVDSGGPSSFSGLNGIS.

The PPM-type phosphatase domain occupies glutamate 53 to isoleucine 352. Mn(2+) contacts are provided by aspartate 84, glycine 85, aspartate 284, and aspartate 343.

Belongs to the PP2C family. It depends on Mg(2+) as a cofactor. Mn(2+) is required as a cofactor.

The enzyme catalyses O-phospho-L-seryl-[protein] + H2O = L-seryl-[protein] + phosphate. The catalysed reaction is O-phospho-L-threonyl-[protein] + H2O = L-threonyl-[protein] + phosphate. This is Probable protein phosphatase 2C 43 from Oryza sativa subsp. japonica (Rice).